We begin with the raw amino-acid sequence, 535 residues long: Pescadillo homolog (535 aa).

Positions 314 to 406 constitute a BRCT domain; it reads KRKQLFANYR…SCLSIKKYLP (93 aa).

The protein belongs to the pescadillo family.

It is found in the nucleus. It localises to the nucleolus. The protein localises to the nucleoplasm. Its function is as follows. Required for maturation of ribosomal RNAs and formation of the large ribosomal subunit. This is Pescadillo homolog from Brugia malayi (Filarial nematode worm).